Reading from the N-terminus, the 367-residue chain is ELAV-like protein 3 (367 aa).

RRM domains follow at residues 39–117 (TNLI…YARP), 125–205 (ANLY…FANN), and 284–362 (WCIF…FKTS).

It belongs to the RRM elav family. As to quaternary structure, interacts with MAP1B light chain LC1. Brain specific.

RNA-binding protein that binds to AU-rich element (ARE) sequences of target mRNAs, including VEGF mRNA. May also bind poly-A tracts via RRM 3. May be involved in neuronal differentiation and maintenance. Plays a role in the stabilization of GAP43 mRNA and in spatial learning. This is ELAV-like protein 3 (ELAVL3) from Homo sapiens (Human).